A 211-amino-acid polypeptide reads, in one-letter code: MIIAIDGPAASGKGTLAKRLAAHYGLRHLDTGVIYRAVGMGMLALGAELTDEARAAAVAAALDPKTFDDPALKSQAVGEAASVVSALPKVRAALVDFQRRFADTPPGAVLDGRDIGTVICPQAEVKIFVVADPVVRARRRTLEAQSRGEPADEAVILADILKRDERDRSRAAAPLKQADDAHLLDNSHLDVESGLRAAIDIVEAVRAGRLR.

ATP is bound at residue 7-15 (GPAASGKGT).

Belongs to the cytidylate kinase family. Type 1 subfamily.

It localises to the cytoplasm. The enzyme catalyses CMP + ATP = CDP + ADP. The catalysed reaction is dCMP + ATP = dCDP + ADP. This chain is Cytidylate kinase, found in Rhodopseudomonas palustris (strain BisA53).